Consider the following 273-residue polypeptide: Rhamnulose-1-phosphate aldolase (273 aa).

Glutamate 117 is an active-site residue. Histidine 140, histidine 142, and histidine 211 together coordinate Zn(2+).

This sequence belongs to the aldolase class II family. RhaD subfamily. Zn(2+) serves as cofactor.

It is found in the cytoplasm. The enzyme catalyses L-rhamnulose 1-phosphate = (S)-lactaldehyde + dihydroxyacetone phosphate. It functions in the pathway carbohydrate degradation; L-rhamnose degradation; glycerone phosphate from L-rhamnose: step 3/3. Catalyzes the reversible cleavage of L-rhamnulose-1-phosphate to dihydroxyacetone phosphate (DHAP) and L-lactaldehyde. The protein is Rhamnulose-1-phosphate aldolase of Listeria monocytogenes serotype 4b (strain CLIP80459).